The chain runs to 334 residues: 6-phosphogluconolactonase (334 aa).

This sequence belongs to the cycloisomerase 2 family.

It catalyses the reaction 6-phospho-D-glucono-1,5-lactone + H2O = 6-phospho-D-gluconate + H(+). It functions in the pathway carbohydrate degradation; pentose phosphate pathway; D-ribulose 5-phosphate from D-glucose 6-phosphate (oxidative stage): step 2/3. Its function is as follows. Catalyzes the hydrolysis of 6-phosphogluconolactone to 6-phosphogluconate. The polypeptide is 6-phosphogluconolactonase (Buchnera aphidicola subsp. Acyrthosiphon pisum (strain APS) (Acyrthosiphon pisum symbiotic bacterium)).